Here is a 91-residue protein sequence, read N- to C-terminus: MGLLDLFKKKGSSDVAKDRLKLLLVSDRANCSPEVMEMIKNDIIKVISKYMEIDTDGLDIQITSTESDTNNGSVPAIFANIPIKDMRNSEK.

The protein belongs to the MinE family.

Functionally, prevents the cell division inhibition by proteins MinC and MinD at internal division sites while permitting inhibition at polar sites. This ensures cell division at the proper site by restricting the formation of a division septum at the midpoint of the long axis of the cell. The chain is Cell division topological specificity factor from Lachnospira eligens (strain ATCC 27750 / DSM 3376 / VPI C15-48 / C15-B4) (Eubacterium eligens).